The following is a 658-amino-acid chain: Cysteine-rich receptor-like protein kinase 36 (658 aa).

Positions 1–26 are cleaved as a signal peptide; sequence MERSNLFHIPCFLLLFLLFNINGVHT. Gnk2-homologous domains lie at 27–128 and 139–246; these read TFVC…NIHR and NVPH…DYRF. At 27–281 the chain is on the extracellular side; that stretch reads TFVCGDEDFS…KKGRMFQPWS (255 aa). N-linked (GlcNAc...) asparagine glycosylation is found at N38, N64, N116, N150, and N163. The helical transmembrane segment at 282–302 threads the bilayer; the sequence is VVVVVFPTGINLAVFVAFVLA. The Cytoplasmic portion of the chain corresponds to 303 to 658; that stretch reads YRRMRRRIYT…EVSITVLYPR (356 aa). In terms of domain architecture, Protein kinase spans 340–612; it reads FSLENKLGQG…ITWLARDGTF (273 aa). Residues 346–354 and K368 contribute to the ATP site; that span reads LGQGGFGSV. Residue Y413 is modified to Phosphotyrosine. D465 acts as the Proton acceptor in catalysis. The residue at position 469 (S469) is a Phosphoserine. T505 carries the post-translational modification Phosphothreonine. Phosphotyrosine is present on Y513.

Belongs to the protein kinase superfamily. Ser/Thr protein kinase family. CRK subfamily. Interacts with CRK45. In terms of processing, autophosphorylated.

It is found in the cell membrane. It carries out the reaction L-seryl-[protein] + ATP = O-phospho-L-seryl-[protein] + ADP + H(+). The catalysed reaction is L-threonyl-[protein] + ATP = O-phospho-L-threonyl-[protein] + ADP + H(+). Forms a complex with CRK45 that may negatively control abscisic acid (ABA) and osmotic stress signal transduction. Can phosphorylate CRK45 in vitro. The polypeptide is Cysteine-rich receptor-like protein kinase 36 (Arabidopsis thaliana (Mouse-ear cress)).